The sequence spans 569 residues: Sulfite reductase [NADPH] hemoprotein beta-component (569 aa).

C433, C439, C478, and C482 together coordinate [4Fe-4S] cluster. C482 lines the siroheme pocket.

Belongs to the nitrite and sulfite reductase 4Fe-4S domain family. In terms of assembly, alpha(8)-beta(8). The alpha component is a flavoprotein, the beta component is a hemoprotein. The cofactor is siroheme. It depends on [4Fe-4S] cluster as a cofactor.

It carries out the reaction hydrogen sulfide + 3 NADP(+) + 3 H2O = sulfite + 3 NADPH + 4 H(+). Its pathway is sulfur metabolism; hydrogen sulfide biosynthesis; hydrogen sulfide from sulfite (NADPH route): step 1/1. Functionally, component of the sulfite reductase complex that catalyzes the 6-electron reduction of sulfite to sulfide. This is one of several activities required for the biosynthesis of L-cysteine from sulfate. This Pseudoalteromonas atlantica (strain T6c / ATCC BAA-1087) protein is Sulfite reductase [NADPH] hemoprotein beta-component.